The chain runs to 561 residues: Eukaryotic translation initiation factor 3 subunit D-1 (561 aa).

Residues 98-164 (VQKPPHQRGR…RGPPPKMRES (67 aa)) are disordered. Positions 100 to 121 (KPPHQRGRFRNMRNSRSGRGRN) are enriched in basic residues. Thr128 carries the post-translational modification Phosphothreonine. Residues 289–303 (EFDLLTVNETSVEPP) are RNA gate.

It belongs to the eIF-3 subunit D family. Component of the eukaryotic translation initiation factor 3 (eIF-3) complex. The eIF-3 complex interacts with pix.

Its subcellular location is the cytoplasm. Functionally, mRNA cap-binding component of the eukaryotic translation initiation factor 3 (eIF-3) complex, which is involved in protein synthesis of a specialized repertoire of mRNAs and, together with other initiation factors, stimulates binding of mRNA and methionyl-tRNAi to the 40S ribosome. The eIF-3 complex specifically targets and initiates translation of a subset of mRNAs involved in cell proliferation. In the eIF-3 complex, eif3d specifically recognizes and binds the 7-methylguanosine cap of a subset of mRNAs. In Drosophila ananassae (Fruit fly), this protein is Eukaryotic translation initiation factor 3 subunit D-1.